Consider the following 224-residue polypeptide: UPF0758 protein BLi02933/BL00636 (224 aa).

Residues 102–224 (VIRFPEDAAN…FVSLKEKGYL (123 aa)) enclose the MPN domain. 3 residues coordinate Zn(2+): His173, His175, and Asp186. Positions 173 to 186 (HNHPSGDPAPSRED) match the JAMM motif motif.

Belongs to the UPF0758 family.

The protein is UPF0758 protein BLi02933/BL00636 of Bacillus licheniformis (strain ATCC 14580 / DSM 13 / JCM 2505 / CCUG 7422 / NBRC 12200 / NCIMB 9375 / NCTC 10341 / NRRL NRS-1264 / Gibson 46).